The chain runs to 95 residues: Co-chaperonin GroES (95 aa).

It belongs to the GroES chaperonin family. Heptamer of 7 subunits arranged in a ring. Interacts with the chaperonin GroEL.

It localises to the cytoplasm. Together with the chaperonin GroEL, plays an essential role in assisting protein folding. The GroEL-GroES system forms a nano-cage that allows encapsulation of the non-native substrate proteins and provides a physical environment optimized to promote and accelerate protein folding. GroES binds to the apical surface of the GroEL ring, thereby capping the opening of the GroEL channel. In Streptococcus uberis (strain ATCC BAA-854 / 0140J), this protein is Co-chaperonin GroES.